Here is a 183-residue protein sequence, read N- to C-terminus: ATP synthase subunit b, chloroplastic (183 aa).

Residues 25-45 (DILATNLINLTVVVGVLIFFG) traverse the membrane as a helical segment.

The protein belongs to the ATPase B chain family. F-type ATPases have 2 components, F(1) - the catalytic core - and F(0) - the membrane proton channel. F(1) has five subunits: alpha(3), beta(3), gamma(1), delta(1), epsilon(1). F(0) has four main subunits: a(1), b(1), b'(1) and c(10-14). The alpha and beta chains form an alternating ring which encloses part of the gamma chain. F(1) is attached to F(0) by a central stalk formed by the gamma and epsilon chains, while a peripheral stalk is formed by the delta, b and b' chains.

It is found in the plastid. The protein resides in the chloroplast thylakoid membrane. Functionally, f(1)F(0) ATP synthase produces ATP from ADP in the presence of a proton or sodium gradient. F-type ATPases consist of two structural domains, F(1) containing the extramembraneous catalytic core and F(0) containing the membrane proton channel, linked together by a central stalk and a peripheral stalk. During catalysis, ATP synthesis in the catalytic domain of F(1) is coupled via a rotary mechanism of the central stalk subunits to proton translocation. In terms of biological role, component of the F(0) channel, it forms part of the peripheral stalk, linking F(1) to F(0). This chain is ATP synthase subunit b, chloroplastic, found in Sorghum bicolor (Sorghum).